The chain runs to 180 residues: Regulator of G-protein signaling 8 (180 aa).

Serine 26 bears the Phosphoserine mark. Residues 56-171 (SFDVLLSHKY…FLRSKMYLDL (116 aa)) enclose the RGS domain.

Interacts with GNAO1. Interacts with GNAI3.

It is found in the cell membrane. The protein localises to the membrane. Its subcellular location is the perikaryon. It localises to the cell projection. The protein resides in the dendrite. It is found in the nucleus. Functionally, regulates G protein-coupled receptor signaling cascades, including signaling via muscarinic acetylcholine receptor CHRM2 and dopamine receptor DRD2. Inhibits signal transduction by increasing the GTPase activity of G protein alpha subunits, thereby driving them into their inactive GDP-bound form. Modulates the activity of potassium channels that are activated in response to DRD2 and CHRM2 signaling. The protein is Regulator of G-protein signaling 8 (RGS8) of Homo sapiens (Human).